The following is a 156-amino-acid chain: CD-NTase/cGAS isopeptidase (156 aa).

Residues 9 to 147 enclose the MPN domain; that stretch reads IDDFDNHVVI…WIGKKIKNDI (139 aa). The active-site Proton donor/acceptor is the E38. Residues H100, H102, and D113 each contribute to the Zn(2+) site. Residues 100–113 carry the JAMM motif motif; sequence HTHPEDFPHPSFID.

This sequence belongs to the peptidase M67B family. Cap3 isopeptidase subfamily.

Functionally, metalloprotease priming reversal component of a CBASS antivirus system. CBASS (cyclic oligonucleotide-based antiphage signaling system) provides immunity against bacteriophages. The CD-NTase protein (DncV) synthesizes cyclic nucleotides in response to infection; these serve as specific second messenger signals. The signals activate a diverse range of effectors, leading to bacterial cell death and thus abortive phage infection. A type II-A(GA) CBASS system. Its function is as follows. Reverses the primed state of DncV, the CD-NTase, cleaving it from cellular proteins. Cleaves a Sumo-DncV-DncV fusion protein precisely between the 2 DncV moieties. Protects E.coli against phage infection. When capV and dncV are introduced in E.coli MG1655 there is 1000-fold protection against phage P1; protection against other phage (T4, T5 and T6) requires the 2 subsequent genes. In another paper the capV-dncV-cap2-cap3 operon gives 10(4)-10(5)-fold protection against phages lambda, T2, T4 and T6, about 1000-fold protection against P1 and 10-fold protection against T5. The chain is CD-NTase/cGAS isopeptidase from Escherichia coli (strain TW11681).